Reading from the N-terminus, the 130-residue chain is MGDYIVVLEAPIVVKDVESVEEAIEKAVNKVVSALEREKLDFVRVELGYSQCPVCGAHFESAFVVGNVGLVGIYLTLKVFNAQSLEHAERIAKAVVGKALKKVPLKLFEIKELHNGREGGGITFEEEYQG.

This sequence belongs to the UPF0212 family.

The polypeptide is UPF0212 protein PF1486 (Pyrococcus furiosus (strain ATCC 43587 / DSM 3638 / JCM 8422 / Vc1)).